Consider the following 78-residue polypeptide: UPF0270 protein YPTB3725 (78 aa).

This sequence belongs to the UPF0270 family.

The sequence is that of UPF0270 protein YPTB3725 from Yersinia pseudotuberculosis serotype I (strain IP32953).